Consider the following 304-residue polypeptide: tRNA pseudouridine synthase B (304 aa).

The active-site Nucleophile is the aspartate 38.

The protein belongs to the pseudouridine synthase TruB family. Type 1 subfamily.

It carries out the reaction uridine(55) in tRNA = pseudouridine(55) in tRNA. Functionally, responsible for synthesis of pseudouridine from uracil-55 in the psi GC loop of transfer RNAs. This chain is tRNA pseudouridine synthase B, found in Listeria innocua serovar 6a (strain ATCC BAA-680 / CLIP 11262).